The sequence spans 562 residues: Eukaryotic translation initiation factor 3 subunit L (562 aa).

Positions 1-29 (MSHAKEDYDSSYDPYSYQADYDGHTGDPK) are disordered. Low complexity predominate over residues 11 to 20 (SYDPYSYQAD). In terms of domain architecture, PCI spans 329 to 535 (DSIRVFANIL…IHIADTKVAR (207 aa)).

Belongs to the eIF-3 subunit L family. In terms of assembly, component of the eukaryotic translation initiation factor 3 (eIF-3) complex, which is composed of 13 subunits: eif3a, eif3b, eif3c, eif3d, eif3e, eif3f, eif3g, eif3h, eif3i, eif3j, eif3k, eif3l and eif3m.

It localises to the cytoplasm. Component of the eukaryotic translation initiation factor 3 (eIF-3) complex, which is involved in protein synthesis of a specialized repertoire of mRNAs and, together with other initiation factors, stimulates binding of mRNA and methionyl-tRNAi to the 40S ribosome. The eIF-3 complex specifically targets and initiates translation of a subset of mRNAs involved in cell proliferation. This Xenopus laevis (African clawed frog) protein is Eukaryotic translation initiation factor 3 subunit L (eif3l).